The primary structure comprises 600 residues: Oligopeptide-binding protein OppA (600 aa).

A signal peptide spans 1-22 (MNKLKVTLLASSVVLAATLLSA). Cysteine 23 carries the N-palmitoyl cysteine lipid modification. Residue cysteine 23 is the site of S-diacylglycerol cysteine attachment.

The protein belongs to the bacterial solute-binding protein 5 family. The complex is composed of two ATP-binding proteins (OppD and OppF), two transmembrane proteins (OppB and OppC) and a solute-binding protein (OppA).

The protein localises to the cell membrane. Part of the ABC transporter complex OppABCDF involved in the uptake of oligopeptides. The sequence is that of Oligopeptide-binding protein OppA from Lactococcus lactis subsp. cremoris (strain SK11).